Reading from the N-terminus, the 114-residue chain is KPKEDREWEKFKTKHITSQSVADFNCNRTMNDPAYTPDGQCKPINTFIHSTTGPVKEICRRATGRVNKSSTQQFTLTTCKNPIRCKYSQSNTTNFICITCRDNYPVHFVKTGKC.

The active-site Proton acceptor is H15. Disulfide bonds link C26/C79, C41/C85, C59/C100, and C97/C114. N27 carries N-linked (GlcNAc...) asparagine glycosylation. 42–46 provides a ligand contact to substrate; sequence KPINT. Residues N67 and N91 are each glycosylated (N-linked (GlcNAc...) asparagine). The Proton donor role is filled by H107.

This sequence belongs to the pancreatic ribonuclease family. Monomer. In terms of processing, there are at least four different forms arising from glycan heterogeneity.

It is found in the secreted. Functionally, endonuclease, hydrolyzes highly polymerized RNA, poly(U) and poly(C), and the dinucleotides CpA and UpA. Hydrolyzes 18S and 28S ribosomal RNA. More active towards rCA than rUA or rUG. Has cytotoxic activity against cultured human submaxillary gland carcinoma cells. The chain is Amphinase-2 from Lithobates pipiens (Northern leopard frog).